A 264-amino-acid chain; its full sequence is Triosephosphate isomerase (264 aa).

Residue 12-14 participates in substrate binding; sequence NWK. The active-site Electrophile is the His-104. Glu-176 functions as the Proton acceptor in the catalytic mechanism. Substrate is bound by residues Gly-182, Ser-222, and 243–244; that span reads GG.

This sequence belongs to the triosephosphate isomerase family. Homodimer.

It is found in the cytoplasm. It catalyses the reaction D-glyceraldehyde 3-phosphate = dihydroxyacetone phosphate. It functions in the pathway carbohydrate biosynthesis; gluconeogenesis. It participates in carbohydrate degradation; glycolysis; D-glyceraldehyde 3-phosphate from glycerone phosphate: step 1/1. Its function is as follows. Involved in the gluconeogenesis. Catalyzes stereospecifically the conversion of dihydroxyacetone phosphate (DHAP) to D-glyceraldehyde-3-phosphate (G3P). The polypeptide is Triosephosphate isomerase (Bifidobacterium adolescentis (strain ATCC 15703 / DSM 20083 / NCTC 11814 / E194a)).